A 473-amino-acid chain; its full sequence is Photosystem II CP43 reaction center protein (473 aa).

Positions 1–14 are excised as a propeptide; the sequence is MKTLYSLRRFYHVE. Thr-15 is modified (N-acetylthreonine). Thr-15 is modified (phosphothreonine). The next 5 membrane-spanning stretches (helical) occupy residues 69 to 93, 134 to 155, 178 to 200, 255 to 275, and 291 to 312; these read LFEVAHFVPEKPMYEQGLILLPHLA, LIGPETLEESFPFFGYVWKDKN, KAVWFGGVYDTWAPGGGDVRKIT, KPFAWARRAFIWSGEAYLSYS, and WFNNTAYPSEFYGPTGPEASQA. Glu-367 lines the [CaMn4O5] cluster pocket. The chain crosses the membrane as a helical span at residues 447–471; sequence RARAAAAGFEKGIDRETEPVFFMNP.

Belongs to the PsbB/PsbC family. PsbC subfamily. PSII is composed of 1 copy each of membrane proteins PsbA, PsbB, PsbC, PsbD, PsbE, PsbF, PsbH, PsbI, PsbJ, PsbK, PsbL, PsbM, PsbT, PsbX, PsbY, PsbZ, Psb30/Ycf12, at least 3 peripheral proteins of the oxygen-evolving complex and a large number of cofactors. It forms dimeric complexes. Requires Binds multiple chlorophylls and provides some of the ligands for the Ca-4Mn-5O cluster of the oxygen-evolving complex. It may also provide a ligand for a Cl- that is required for oxygen evolution. PSII binds additional chlorophylls, carotenoids and specific lipids. as cofactor.

Its subcellular location is the plastid. The protein localises to the chloroplast thylakoid membrane. Its function is as follows. One of the components of the core complex of photosystem II (PSII). It binds chlorophyll and helps catalyze the primary light-induced photochemical processes of PSII. PSII is a light-driven water:plastoquinone oxidoreductase, using light energy to abstract electrons from H(2)O, generating O(2) and a proton gradient subsequently used for ATP formation. The chain is Photosystem II CP43 reaction center protein from Staurastrum punctulatum (Green alga).